Consider the following 603-residue polypeptide: Threonine--tRNA ligase (603 aa).

The tract at residues 209–500 (DHRKLGNEMK…LIEHCAGELP (292 aa)) is catalytic. The Zn(2+) site is built by C301, H352, and H477.

It belongs to the class-II aminoacyl-tRNA synthetase family. In terms of assembly, homodimer. The cofactor is Zn(2+).

It is found in the cytoplasm. The enzyme catalyses tRNA(Thr) + L-threonine + ATP = L-threonyl-tRNA(Thr) + AMP + diphosphate + H(+). Functionally, catalyzes the attachment of threonine to tRNA(Thr) in a two-step reaction: L-threonine is first activated by ATP to form Thr-AMP and then transferred to the acceptor end of tRNA(Thr). Also edits incorrectly charged L-seryl-tRNA(Thr). This Campylobacter lari (strain RM2100 / D67 / ATCC BAA-1060) protein is Threonine--tRNA ligase.